The following is an 80-amino-acid chain: Centromere protein X (80 aa).

It belongs to the CENP-X/MHF2 family. In terms of assembly, heterodimer with CENPX, sometimes called MHF; this interaction stabilizes both partners. MHF heterodimers can assemble to form tetrameric structures. MHF also coassemble with CENPT-CENPW heterodimers at centromeres to form the tetrameric CENP-T-W-S-X complex. Forms a discrete complex with FANCM and CENPX, called FANCM-MHF; this interaction, probably mediated by direct binding between CENPS and FANCM, leads to synergistic activation of double-stranded DNA binding and strongly stimulates FANCM-mediated DNA remodeling. Recruited by FANCM to the Fanconi anemia (FA) core complex, which consists of CENPS, CENPX, FANCA, FANCB, FANCC, FANCE, FANCF, FANCG, FANCL, FANCM, FAAP24 and FAAP100. The FA core complex associates with Bloom syndrome (BLM) complex, which consists of at least BLM, DNA topoisomerase 3-alpha (TOP3A), RMI1/BLAP75, RPA1/RPA70 and RPA2/RPA32. The super complex between FA and BLM is called BRAFT.

Its subcellular location is the nucleus. It is found in the chromosome. The protein localises to the centromere. The protein resides in the kinetochore. In terms of biological role, DNA-binding component of the Fanconi anemia (FA) core complex. Required for the normal activation of the FA pathway, leading to monoubiquitination of the FANCI-FANCD2 complex in response to DNA damage, cellular resistance to DNA cross-linking drugs, and prevention of chromosomal breakage. In complex with CENPS (MHF heterodimer), crucial cofactor for FANCM in both binding and ATP-dependent remodeling of DNA. Stabilizes FANCM. In complex with CENPS and FANCM (but not other FANC proteins), rapidly recruited to blocked forks and promotes gene conversion at blocked replication forks. In complex with CENPS, CENPT and CENPW (CENP-T-W-S-X heterotetramer), involved in the formation of a functional kinetochore outer plate, which is essential for kinetochore-microtubule attachment and faithful mitotic progression. As a component of MHF and CENP-T-W-S-X complexes, binds DNA and bends it to form a nucleosome-like structure. DNA-binding function is fulfilled in the presence of CENPS, with the following preference for DNA substates: Holliday junction &gt; double-stranded &gt; splay arm &gt; single-stranded. Does not bind DNA on its own. This chain is Centromere protein X (CENPX), found in Gallus gallus (Chicken).